We begin with the raw amino-acid sequence, 294 residues long: NAD kinase (294 aa).

Residue Asp-73 is the Proton acceptor of the active site. Residues Asp-73–Gly-74, Asn-147–Glu-148, His-158, Arg-175, Asp-177, and Thr-188–Ser-193 each bind NAD(+).

It belongs to the NAD kinase family. It depends on a divalent metal cation as a cofactor.

It is found in the cytoplasm. The enzyme catalyses NAD(+) + ATP = ADP + NADP(+) + H(+). Its function is as follows. Involved in the regulation of the intracellular balance of NAD and NADP, and is a key enzyme in the biosynthesis of NADP. Catalyzes specifically the phosphorylation on 2'-hydroxyl of the adenosine moiety of NAD to yield NADP. This is NAD kinase from Tolumonas auensis (strain DSM 9187 / NBRC 110442 / TA 4).